Here is a 98-residue protein sequence, read N- to C-terminus: Aspartyl/glutamyl-tRNA(Asn/Gln) amidotransferase subunit C (98 aa).

Residues Gln76–Asp98 are disordered.

Belongs to the GatC family. In terms of assembly, heterotrimer of A, B and C subunits.

The enzyme catalyses L-glutamyl-tRNA(Gln) + L-glutamine + ATP + H2O = L-glutaminyl-tRNA(Gln) + L-glutamate + ADP + phosphate + H(+). It catalyses the reaction L-aspartyl-tRNA(Asn) + L-glutamine + ATP + H2O = L-asparaginyl-tRNA(Asn) + L-glutamate + ADP + phosphate + 2 H(+). Its function is as follows. Allows the formation of correctly charged Asn-tRNA(Asn) or Gln-tRNA(Gln) through the transamidation of misacylated Asp-tRNA(Asn) or Glu-tRNA(Gln) in organisms which lack either or both of asparaginyl-tRNA or glutaminyl-tRNA synthetases. The reaction takes place in the presence of glutamine and ATP through an activated phospho-Asp-tRNA(Asn) or phospho-Glu-tRNA(Gln). The sequence is that of Aspartyl/glutamyl-tRNA(Asn/Gln) amidotransferase subunit C from Renibacterium salmoninarum (strain ATCC 33209 / DSM 20767 / JCM 11484 / NBRC 15589 / NCIMB 2235).